Consider the following 267-residue polypeptide: Indole-3-glycerol phosphate synthase (267 aa).

Belongs to the TrpC family.

It catalyses the reaction 1-(2-carboxyphenylamino)-1-deoxy-D-ribulose 5-phosphate + H(+) = (1S,2R)-1-C-(indol-3-yl)glycerol 3-phosphate + CO2 + H2O. Its pathway is amino-acid biosynthesis; L-tryptophan biosynthesis; L-tryptophan from chorismate: step 4/5. In Cupriavidus pinatubonensis (strain JMP 134 / LMG 1197) (Cupriavidus necator (strain JMP 134)), this protein is Indole-3-glycerol phosphate synthase.